The primary structure comprises 437 residues: Pterin deaminase (437 aa).

A divalent metal cation is bound by residues His80 and His82. Lys85 provides a ligand contact to substrate. His231 serves as a coordination point for a divalent metal cation. Glu234 acts as the Proton donor in catalysis. Residue Asp331 coordinates a divalent metal cation. Asp331 to Asn332 contacts substrate.

This sequence belongs to the metallo-dependent hydrolases superfamily. Pterin deaminase family. Requires a divalent metal cation as cofactor.

The catalysed reaction is a 2-amino-4-hydroxypteridine + H2O + H(+) = a 2,4-dihydroxypteridine + NH4(+). It catalyses the reaction L-sepiapterin + H2O + H(+) = (S)-xanthopterin-B2 + NH4(+). In terms of biological role, catalyzes the deamination of many pterin metabolites, such as formylpterin, pterin-6-carboxylate, pterin-7-carboxylate, pterin, hydroxymethylpterin, biopterin, D-(+)-neopterin, isoxanthopterin, sepiapterin, folate, xanthopterin, and 7,8-dihydrohydroxymethylpterin. May be involved in a degradative pathway for catabolizing pterin rings. This is Pterin deaminase from Rhizobium rhizogenes (strain K84 / ATCC BAA-868) (Agrobacterium radiobacter).